Reading from the N-terminus, the 309-residue chain is Transaldolase (309 aa).

The Schiff-base intermediate with substrate role is filled by Lys-125.

The protein belongs to the transaldolase family. Type 1 subfamily. Homodimer.

The protein resides in the cytoplasm. The enzyme catalyses D-sedoheptulose 7-phosphate + D-glyceraldehyde 3-phosphate = D-erythrose 4-phosphate + beta-D-fructose 6-phosphate. The protein operates within carbohydrate degradation; pentose phosphate pathway; D-glyceraldehyde 3-phosphate and beta-D-fructose 6-phosphate from D-ribose 5-phosphate and D-xylulose 5-phosphate (non-oxidative stage): step 2/3. In terms of biological role, transaldolase is important for the balance of metabolites in the pentose-phosphate pathway. This Pseudomonas syringae pv. tomato (strain ATCC BAA-871 / DC3000) protein is Transaldolase.